Reading from the N-terminus, the 510-residue chain is tRNA-2-methylthio-N(6)-dimethylallyladenosine synthase (510 aa).

The region spanning 19–144 (RTYQVRTFGC…LPVLLERARH (126 aa)) is the MTTase N-terminal domain. Positions 28, 73, 107, 181, 185, and 188 each coordinate [4Fe-4S] cluster. The region spanning 167–397 (RESPYAAWVS…TALQDRITYE (231 aa)) is the Radical SAM core domain. The 71-residue stretch at 400 to 470 (QAQTGRTLEV…PHYLEADDVS (71 aa)) folds into the TRAM domain. Over residues 482–492 (AWEARQARPEP) the composition is skewed to basic and acidic residues. Residues 482 to 510 (AWEARQARPEPESTGPRPVGLGLPTLRRA) form a disordered region.

Belongs to the methylthiotransferase family. MiaB subfamily. As to quaternary structure, monomer. Requires [4Fe-4S] cluster as cofactor.

It localises to the cytoplasm. It carries out the reaction N(6)-dimethylallyladenosine(37) in tRNA + (sulfur carrier)-SH + AH2 + 2 S-adenosyl-L-methionine = 2-methylsulfanyl-N(6)-dimethylallyladenosine(37) in tRNA + (sulfur carrier)-H + 5'-deoxyadenosine + L-methionine + A + S-adenosyl-L-homocysteine + 2 H(+). Functionally, catalyzes the methylthiolation of N6-(dimethylallyl)adenosine (i(6)A), leading to the formation of 2-methylthio-N6-(dimethylallyl)adenosine (ms(2)i(6)A) at position 37 in tRNAs that read codons beginning with uridine. The protein is tRNA-2-methylthio-N(6)-dimethylallyladenosine synthase of Kineococcus radiotolerans (strain ATCC BAA-149 / DSM 14245 / SRS30216).